The chain runs to 100 residues: Urease subunit gamma (100 aa).

This sequence belongs to the urease gamma subunit family. Heterotrimer of UreA (gamma), UreB (beta) and UreC (alpha) subunits. Three heterotrimers associate to form the active enzyme.

It localises to the cytoplasm. The enzyme catalyses urea + 2 H2O + H(+) = hydrogencarbonate + 2 NH4(+). Its pathway is nitrogen metabolism; urea degradation; CO(2) and NH(3) from urea (urease route): step 1/1. In Hahella chejuensis (strain KCTC 2396), this protein is Urease subunit gamma.